A 358-amino-acid polypeptide reads, in one-letter code: Bi-functional coumaroyl CoA and feruloyl CoA ortho-hydroxylase F6H2-1-1 (358 aa).

One can recognise a Fe2OG dioxygenase domain in the interval 207–308 (GSRRININYY…RISVPVFVNP (102 aa)). Tyrosine 216 serves as a coordination point for 2-oxoglutarate. Positions 231, 233, and 289 each coordinate Fe cation. Residues arginine 299 and serine 301 each coordinate 2-oxoglutarate.

The protein belongs to the iron/ascorbate-dependent oxidoreductase family. The cofactor is L-ascorbate. Fe(2+) serves as cofactor. Mostly expressed in underground stems and stems, and, at low levels, in tubers, leaves and petioles.

It carries out the reaction (E)-4-coumaroyl-CoA + 2-oxoglutarate + O2 = (E)-2,4-dihydroxycinnamoyl-CoA + succinate + CO2. The catalysed reaction is (E)-feruloyl-CoA + 2-oxoglutarate + O2 = (E)-6-hydroxyferuloyl-CoA + succinate + CO2. Its pathway is phenylpropanoid metabolism. 2-oxoglutarate (OG)- and Fe(II)-dependent dioxygenase (2OGD) involved in scopoletin and umbelliferone biosynthesis. Converts feruloyl CoA into 6'-hydroxyferuloyl CoA, and p-coumaroyl CoA into 2,4-dihydroxycinnamoyl-CoA, but has no activity with caffeoyl-CoA. This Ipomoea batatas (Sweet potato) protein is Bi-functional coumaroyl CoA and feruloyl CoA ortho-hydroxylase F6H2-1-1.